The chain runs to 222 residues: Flagellin B5 (222 aa).

The propeptide occupies 1–4 (MRRG).

This sequence belongs to the archaeal flagellin family.

It localises to the archaeal flagellum. In terms of biological role, flagellin is the subunit protein which polymerizes to form the filaments of archaeal flagella. The sequence is that of Flagellin B5 (flaB5) from Pyrococcus abyssi (strain GE5 / Orsay).